The chain runs to 473 residues: UDP-glycosyltransferase 91D2 (473 aa).

H26 (proton acceptor) is an active-site residue. H26 contacts an anthocyanidin. Residue D121 is the Charge relay of the active site. 5 residues coordinate UDP-alpha-D-glucose: A344, Q346, H361, S366, and E369. Residue G384 coordinates an anthocyanidin. D385 and Q386 together coordinate UDP-alpha-D-glucose.

The protein belongs to the UDP-glycosyltransferase family.

The enzyme catalyses steviolmonoside + UDP-alpha-D-glucose = steviolbioside + UDP + H(+). It carries out the reaction rubusoside + UDP-alpha-D-glucose = stevioside + UDP + H(+). The catalysed reaction is stevioside + UDP-alpha-D-glucose = rebaudioside E + UDP + H(+). It catalyses the reaction rebaudioside A + UDP-alpha-D-glucose = rebaudioside D + UDP + H(+). Involved in the biosynthesis of steviol glycosides in leaves. Converts the mono-glycoside steviolmonoside to the bi-glycoside steviolbioside. Converts the bi-glycoside rubusoside to the tri-glycoside stevioside. Converts the tri-glycoside stevioside to the tetra-glycoside rebaudioside E. Converts the tetra-glycoside rebaudioside A to the penta-glycoside rebaudioside E. This chain is UDP-glycosyltransferase 91D2, found in Stevia rebaudiana (Stevia).